A 121-amino-acid polypeptide reads, in one-letter code: Large ribosomal subunit protein uL14 (121 aa).

Belongs to the universal ribosomal protein uL14 family. As to quaternary structure, part of the 50S ribosomal subunit. Forms a cluster with proteins L3 and L19. In the 70S ribosome, L14 and L19 interact and together make contacts with the 16S rRNA in bridges B5 and B8.

Functionally, binds to 23S rRNA. Forms part of two intersubunit bridges in the 70S ribosome. In Porphyromonas gingivalis (strain ATCC 33277 / DSM 20709 / CIP 103683 / JCM 12257 / NCTC 11834 / 2561), this protein is Large ribosomal subunit protein uL14.